Here is an 86-residue protein sequence, read N- to C-terminus: Secreted transmembrane peptide 6 (86 aa).

The signal sequence occupies residues 1–31 (MGMKSPNIAAFMLPLLLILFTLSSQLKVVES). The SCOOP motif motif lies at 45–58 (IVYTPPSRSCGTSP). The SxS motif essential for MIK2 binding signature appears at 51-53 (SRS).

It belongs to the serine rich endogenous peptide (SCOOP) phytocytokine family. In terms of assembly, interacts with MIK2 (via extracellular leucine-rich repeat domain); this interaction triggers the formation of complex between MIK2 and the BAK1/SERK3 and SERK4 coreceptors, and subsequent BAK1 activation by phosphorylation. Mostly expressed in leaves, and, to a lower extent, in roots, stems, siliques, seeds and flowers.

It localises to the cell membrane. Its subcellular location is the secreted. The protein localises to the extracellular space. The protein resides in the apoplast. Brassicaceae-specific phytocytokine (plant endogenous peptide released into the apoplast) perceived by MIK2 in a BAK1/SERK3 and SERK4 coreceptors-dependent manner, that modulates various physiological and antimicrobial processes including growth prevention and reactive oxygen species (ROS) response regulation. Prevents general growth and development. The sequence is that of Secreted transmembrane peptide 6 from Arabidopsis thaliana (Mouse-ear cress).